The chain runs to 943 residues: Isoleucine--tRNA ligase (943 aa).

The short motif at 58–68 is the 'HIGH' region element; sequence PYANGNIHIGH. Glu567 lines the L-isoleucyl-5'-AMP pocket. The 'KMSKS' region signature appears at 608–612; the sequence is KMSKS. Lys611 lines the ATP pocket. Cys906, Cys909, Cys926, and Cys929 together coordinate Zn(2+).

The protein belongs to the class-I aminoacyl-tRNA synthetase family. IleS type 1 subfamily. Monomer. The cofactor is Zn(2+).

The protein localises to the cytoplasm. It carries out the reaction tRNA(Ile) + L-isoleucine + ATP = L-isoleucyl-tRNA(Ile) + AMP + diphosphate. Functionally, catalyzes the attachment of isoleucine to tRNA(Ile). As IleRS can inadvertently accommodate and process structurally similar amino acids such as valine, to avoid such errors it has two additional distinct tRNA(Ile)-dependent editing activities. One activity is designated as 'pretransfer' editing and involves the hydrolysis of activated Val-AMP. The other activity is designated 'posttransfer' editing and involves deacylation of mischarged Val-tRNA(Ile). The chain is Isoleucine--tRNA ligase from Pseudomonas savastanoi pv. phaseolicola (strain 1448A / Race 6) (Pseudomonas syringae pv. phaseolicola (strain 1448A / Race 6)).